The sequence spans 342 residues: tRNA N6-adenosine threonylcarbamoyltransferase (342 aa).

The Fe cation site is built by H112 and H116. Residues 134-138 (LASGG), D167, G180, and N280 each bind substrate. D308 contributes to the Fe cation binding site.

This sequence belongs to the KAE1 / TsaD family. The cofactor is Fe(2+).

The protein localises to the cytoplasm. It carries out the reaction L-threonylcarbamoyladenylate + adenosine(37) in tRNA = N(6)-L-threonylcarbamoyladenosine(37) in tRNA + AMP + H(+). Its function is as follows. Required for the formation of a threonylcarbamoyl group on adenosine at position 37 (t(6)A37) in tRNAs that read codons beginning with adenine. Is involved in the transfer of the threonylcarbamoyl moiety of threonylcarbamoyl-AMP (TC-AMP) to the N6 group of A37, together with TsaE and TsaB. TsaD likely plays a direct catalytic role in this reaction. The polypeptide is tRNA N6-adenosine threonylcarbamoyltransferase (Rickettsia canadensis (strain McKiel)).